A 273-amino-acid polypeptide reads, in one-letter code: 4-hydroxy-tetrahydrodipicolinate reductase (273 aa).

NAD(+) contacts are provided by residues 12–17 (GAGGRM) and E38. R39 is a binding site for NADP(+). Residues 102–104 (GTT) and 126–129 (AANF) contribute to the NAD(+) site. Residue H159 is the Proton donor/acceptor of the active site. A (S)-2,3,4,5-tetrahydrodipicolinate-binding site is contributed by H160. The active-site Proton donor is the K163. Position 169-170 (169-170 (GT)) interacts with (S)-2,3,4,5-tetrahydrodipicolinate.

Belongs to the DapB family. In terms of assembly, homotetramer.

It is found in the cytoplasm. It carries out the reaction (S)-2,3,4,5-tetrahydrodipicolinate + NAD(+) + H2O = (2S,4S)-4-hydroxy-2,3,4,5-tetrahydrodipicolinate + NADH + H(+). It catalyses the reaction (S)-2,3,4,5-tetrahydrodipicolinate + NADP(+) + H2O = (2S,4S)-4-hydroxy-2,3,4,5-tetrahydrodipicolinate + NADPH + H(+). It participates in amino-acid biosynthesis; L-lysine biosynthesis via DAP pathway; (S)-tetrahydrodipicolinate from L-aspartate: step 4/4. In terms of biological role, catalyzes the conversion of 4-hydroxy-tetrahydrodipicolinate (HTPA) to tetrahydrodipicolinate. The polypeptide is 4-hydroxy-tetrahydrodipicolinate reductase (Salmonella dublin (strain CT_02021853)).